The chain runs to 317 residues: Putative 2-hydroxyacid dehydrogenase SA2098 (317 aa).

NAD(+) is bound by residues 155–156 (EI), 234–236 (ASR), and Asp260. The active site involves Arg236. Glu265 is an active-site residue. The active-site Proton donor is the His283. 283–286 (HIGN) serves as a coordination point for NAD(+).

This sequence belongs to the D-isomer specific 2-hydroxyacid dehydrogenase family.

The polypeptide is Putative 2-hydroxyacid dehydrogenase SA2098 (Staphylococcus aureus (strain N315)).